Reading from the N-terminus, the 78-residue chain is Large ribosomal subunit protein bL31 (78 aa).

Belongs to the bacterial ribosomal protein bL31 family. Type A subfamily. In terms of assembly, part of the 50S ribosomal subunit.

Functionally, binds the 23S rRNA. This is Large ribosomal subunit protein bL31 from Rickettsia prowazekii (strain Madrid E).